Reading from the N-terminus, the 222-residue chain is 25 kDa elongation factor 1-beta (222 aa).

Residues 75 to 94 show a composition bias toward low complexity; that stretch reads TSASAPAKQAPKKAASAPAK. Residues 75–98 are disordered; it reads TSASAPAKQAPKKAASAPAKQADE.

It belongs to the EF-1-beta/EF-1-delta family. EF-1 is composed of 4 subunits: alpha, beta, delta, and gamma.

Functionally, EF-1-beta and EF-1-delta stimulate the exchange of GDP bound to EF-1-alpha to GTP. The sequence is that of 25 kDa elongation factor 1-beta from Trypanosoma cruzi.